We begin with the raw amino-acid sequence, 455 residues long: Alcohol acyl transferase 1 allele RGb (455 aa).

Catalysis depends on proton acceptor residues H164 and N385.

It belongs to the plant acyltransferase family.

Involved in the biosynthesis of volatile esters which confer ripe apple fruit flavor. Alcohol acyl transferase that can use a wide range of alcohols as substrate to produce esters. The chain is Alcohol acyl transferase 1 allele RGb from Malus domestica (Apple).